A 635-amino-acid chain; its full sequence is MIAITLPDGSRREFPGPVTVAEVAQSIGTGLAKAALAGKVDGNLVDTSYSIDRDVALAIITDKDADGVDVIRHSTAHLLAYAVKELYPDAQVTIGPVIENGFYYDFAYKRPFTPEDLAAIEKKMTELSRKDEKVTREVWNRDEAVALFESMGEKYKAEIIASIPADQEIGLYREGKFVDLCRGPHVPSTGKLKVFKLMKVAGAYWRGDANNEMLQRIYGTAWAKKEDQEAYLHMLEEAEKRDHRKLGKSLDLFHLQEEAPGMVFWHPKGWQVWQAVEQYMRGRLTAAGYDEVRTPQVMDRSLWEKSGHWQNYKENMFVTESEKRDYAIKPMNCPGHVQIFNHGLRSYRDLPLRLAEFGACHRNEPSGALHGLMRVRGFVQDDAHIFCTEEQIVAEAKAFNELAFSVYDDFGFKDVAVKLSLRPAQRAGSDEVWDHAEEGLRLALRACGVDWEELPGEGAFYGPKVEYHIKDAIGRSWQCGTLQLDLVLPERLGAEYVAEDNSRKRPVMLHRAILGSFERFLGILLENHAGALPAWLAPEQVVVMNIAESQAEYAENVVQSLLKQGFRAKADLRNEKITYKIREHSLQKIPYLLVVGDKERDANQVAVRARGNVDLGVMPVSAFVERLQQDVTNKA.

In terms of domain architecture, TGS spans Met1–Thr61. Residues Asp242–Pro533 form a catalytic region. Zn(2+) contacts are provided by Cys333, His384, and His510.

It belongs to the class-II aminoacyl-tRNA synthetase family. As to quaternary structure, homodimer. The cofactor is Zn(2+).

It localises to the cytoplasm. The catalysed reaction is tRNA(Thr) + L-threonine + ATP = L-threonyl-tRNA(Thr) + AMP + diphosphate + H(+). Catalyzes the attachment of threonine to tRNA(Thr) in a two-step reaction: L-threonine is first activated by ATP to form Thr-AMP and then transferred to the acceptor end of tRNA(Thr). Also edits incorrectly charged L-seryl-tRNA(Thr). In Cupriavidus pinatubonensis (strain JMP 134 / LMG 1197) (Cupriavidus necator (strain JMP 134)), this protein is Threonine--tRNA ligase.